Here is a 503-residue protein sequence, read N- to C-terminus: Aminoaldehyde dehydrogenase 1, peroxisomal (503 aa).

Na(+)-binding residues include asparagine 27, isoleucine 28, aspartate 99, and leucine 189. 238–245 (GSSATGSK) provides a ligand contact to NAD(+). Glutamate 260 serves as the catalytic Proton acceptor. Residues cysteine 294 and glutamate 393 each contribute to the NAD(+) site. Cysteine 294 serves as the catalytic Nucleophile. The short motif at 501–503 (SKL) is the Microbody targeting signal element.

It belongs to the aldehyde dehydrogenase family. Forms homodimers.

The protein resides in the peroxisome. It carries out the reaction 3-aminopropanal + NAD(+) + H2O = beta-alanine + NADH + 2 H(+). It catalyses the reaction 4-aminobutanal + NAD(+) + H2O = 4-aminobutanoate + NADH + 2 H(+). The enzyme catalyses 4-guanidinobutanal + NAD(+) + H2O = 4-guanidinobutanoate + NADH + 2 H(+). It functions in the pathway amine and polyamine biosynthesis; betaine biosynthesis via choline pathway; betaine from betaine aldehyde: step 1/1. Its function is as follows. Dehydrogenase that catalyzes the oxidation of several aminoaldehydes. Metabolizes and detoxifies aldehyde products of polyamine degradation to non-toxic amino acids. Catalyzes the oxidation of 3-aminopropanal to beta-alanine. Catalyzes the oxidation of 4-aminobutanal to 4-aminobutanoate. Catalyzes the oxidation of 4-guanidinobutanal to 4-guanidinobutanoate. This chain is Aminoaldehyde dehydrogenase 1, peroxisomal, found in Pisum sativum (Garden pea).